The chain runs to 262 residues: Flap endonuclease Xni (262 aa).

Residue Asp-109 coordinates Mg(2+). Residues 165 to 255 (LKPEQLADYW…FNLQDIRYEK (91 aa)) enclose the 5'-3' exonuclease domain. Residues Leu-176, Ala-177, Ile-187, and Val-190 each coordinate K(+). The interval 189–194 (GVGPKA) is interaction with DNA.

Belongs to the Xni family. It depends on Mg(2+) as a cofactor. K(+) is required as a cofactor.

In terms of biological role, has flap endonuclease activity. During DNA replication, flap endonucleases cleave the 5'-overhanging flap structure that is generated by displacement synthesis when DNA polymerase encounters the 5'-end of a downstream Okazaki fragment. This is Flap endonuclease Xni from Aliivibrio fischeri (strain MJ11) (Vibrio fischeri).